The primary structure comprises 71 residues: Small ribosomal subunit protein bS18 (71 aa).

This sequence belongs to the bacterial ribosomal protein bS18 family. Part of the 30S ribosomal subunit. Forms a tight heterodimer with protein bS6.

Functionally, binds as a heterodimer with protein bS6 to the central domain of the 16S rRNA, where it helps stabilize the platform of the 30S subunit. This chain is Small ribosomal subunit protein bS18, found in Nostoc sp. (strain PCC 7120 / SAG 25.82 / UTEX 2576).